We begin with the raw amino-acid sequence, 395 residues long: MLLPQPKSTAKKPKGEAKSLVARERKSQPQDSALMEVPAKREMPKKEVKKIRSVHKVESVTKTKSAKLRRKKSYSLSSDNESKYKKSISPAASEEASIEKKKEEMTSKLPEKSVAMKTANSPKTFNMELAKKFFEMRMKESQRTSRMATKSDSSLETMPESSHNSGQSSKSRKSQRTRGKSTPLDRNIFKENGEPVWVVPDRKPGELVMNEHGEMVKYPELMAALEEDGLEMEDGKGWFQKMSSYLMGELDQGRIDNKAASKDINPFASMETLEERTDLYFSRETVIYNTTDSIFNLCHNAIERFSQQNNEDTIRKSVPPSREPGSKMMTVSKDEEEKTAIVTSIRFDARAYRISYDRRRPVHSIQKFRKKYQKQLKKSQEEKKDDTKTAKNEGD.

4 disordered regions span residues 1–121 (MLLP…TANS), 136–187 (MRMK…LDRN), 308–335 (QNNEDTIRKSVPPSREPGSKMMTVSKDE), and 365–395 (IQKFRKKYQKQLKKSQEEKKDDTKTAKNEGD). Residues 13 to 28 (PKGEAKSLVARERKSQ) are compositionally biased toward basic and acidic residues. The segment covering 64 to 73 (KSAKLRRKKS) has biased composition (basic residues). The segment covering 97–111 (SIEKKKEEMTSKLPE) has biased composition (basic and acidic residues). A compositionally biased stretch (polar residues) spans 144 to 164 (TSRMATKSDSSLETMPESSHN). Positions 170 to 179 (KSRKSQRTRG) are enriched in basic residues. Residues 365–377 (IQKFRKKYQKQLK) show a composition bias toward basic residues. Residues 378–395 (KSQEEKKDDTKTAKNEGD) are compositionally biased toward basic and acidic residues.

This is an uncharacterized protein from Caenorhabditis elegans.